The following is an 859-amino-acid chain: Leucine--tRNA ligase (859 aa).

Positions 42–52 (PYPSGRLHMGH) match the 'HIGH' region motif. The short motif at 618–622 (KMSKS) is the 'KMSKS' region element. Lysine 621 is a binding site for ATP.

It belongs to the class-I aminoacyl-tRNA synthetase family.

The protein localises to the cytoplasm. The catalysed reaction is tRNA(Leu) + L-leucine + ATP = L-leucyl-tRNA(Leu) + AMP + diphosphate. This is Leucine--tRNA ligase from Shewanella sp. (strain W3-18-1).